Here is a 428-residue protein sequence, read N- to C-terminus: UPF0761 membrane protein Ppha_1623 (428 aa).

6 helical membrane-spanning segments follow: residues Leu-52–Phe-72, Ser-108–Val-128, Phe-148–Ala-168, Leu-189–Val-209, Phe-216–Ser-233, and Gly-252–Leu-272.

The protein belongs to the UPF0761 family.

Its subcellular location is the cell inner membrane. This is UPF0761 membrane protein Ppha_1623 from Pelodictyon phaeoclathratiforme (strain DSM 5477 / BU-1).